A 263-amino-acid chain; its full sequence is Indole-3-glycerol phosphate synthase (263 aa).

The protein belongs to the TrpC family.

The catalysed reaction is 1-(2-carboxyphenylamino)-1-deoxy-D-ribulose 5-phosphate + H(+) = (1S,2R)-1-C-(indol-3-yl)glycerol 3-phosphate + CO2 + H2O. Its pathway is amino-acid biosynthesis; L-tryptophan biosynthesis; L-tryptophan from chorismate: step 4/5. The polypeptide is Indole-3-glycerol phosphate synthase (Polaromonas naphthalenivorans (strain CJ2)).